The following is a 309-amino-acid chain: NmrA-like family domain-containing protein 1 (309 aa).

Residues 11-16 (GATGAQ), 37-41 (RNPEQ), 58-59 (DQ), 79-81 (TNY), Lys-102, Lys-143, and 165-168 (YFEN) contribute to the NADP(+) site. The interaction with ASS1 stretch occupies residues 163–199 (PCYFENLLSYFLPQKAADGKSFLLDLPMGDVPMDGMS).

This sequence belongs to the NmrA-type oxidoreductase family. As to quaternary structure, homodimer. Interacts with ASS1. Interaction is enhanced by low NADPH/NADP(+) ratios, which results in inhibition of ASS1 activity.

It is found in the cytoplasm. It localises to the perinuclear region. The protein resides in the nucleus. Its function is as follows. Redox sensor protein. Undergoes restructuring and subcellular redistribution in response to changes in intracellular NADPH/NADP(+) levels. At low NADPH concentrations the protein is found mainly as a monomer, and binds argininosuccinate synthase (ASS1), the enzyme involved in nitric oxide synthesis. Association with ASS1 impairs its activity and reduces the production of nitric oxide, which subsecuently prevents apoptosis. Under normal NADPH concentrations, the protein is found as a dimer and hides the binding site for ASS1. The homodimer binds one molecule of NADPH. Has higher affinity for NADPH than for NADP(+). Binding to NADPH is necessary to form a stable dimer. The sequence is that of NmrA-like family domain-containing protein 1 (Nmral1) from Mus musculus (Mouse).